Reading from the N-terminus, the 336-residue chain is Holliday junction branch migration complex subunit RuvB (336 aa).

The interval 4–185 is large ATPase domain (RuvB-L); the sequence is MDERLLSGES…FGVLSRLEYY (182 aa). Residues Leu24, Arg25, Gly66, Lys69, Thr70, Thr71, 132–134, Arg175, Tyr185, and Arg222 each bind ATP; that span reads EDF. Position 70 (Thr70) interacts with Mg(2+). Positions 186–256 are small ATPAse domain (RuvB-S); sequence TVDQLSAIVE…ITQMALELLQ (71 aa). The segment at 259–336 is head domain (RuvB-H); that stretch reads KLGLDHIDHK…EHFGMEMPKV (78 aa). DNA is bound by residues Arg314 and Arg319.

This sequence belongs to the RuvB family. Homohexamer. Forms an RuvA(8)-RuvB(12)-Holliday junction (HJ) complex. HJ DNA is sandwiched between 2 RuvA tetramers; dsDNA enters through RuvA and exits via RuvB. An RuvB hexamer assembles on each DNA strand where it exits the tetramer. Each RuvB hexamer is contacted by two RuvA subunits (via domain III) on 2 adjacent RuvB subunits; this complex drives branch migration. In the full resolvosome a probable DNA-RuvA(4)-RuvB(12)-RuvC(2) complex forms which resolves the HJ.

It localises to the cytoplasm. It catalyses the reaction ATP + H2O = ADP + phosphate + H(+). Functionally, the RuvA-RuvB-RuvC complex processes Holliday junction (HJ) DNA during genetic recombination and DNA repair, while the RuvA-RuvB complex plays an important role in the rescue of blocked DNA replication forks via replication fork reversal (RFR). RuvA specifically binds to HJ cruciform DNA, conferring on it an open structure. The RuvB hexamer acts as an ATP-dependent pump, pulling dsDNA into and through the RuvAB complex. RuvB forms 2 homohexamers on either side of HJ DNA bound by 1 or 2 RuvA tetramers; 4 subunits per hexamer contact DNA at a time. Coordinated motions by a converter formed by DNA-disengaged RuvB subunits stimulates ATP hydrolysis and nucleotide exchange. Immobilization of the converter enables RuvB to convert the ATP-contained energy into a lever motion, pulling 2 nucleotides of DNA out of the RuvA tetramer per ATP hydrolyzed, thus driving DNA branch migration. The RuvB motors rotate together with the DNA substrate, which together with the progressing nucleotide cycle form the mechanistic basis for DNA recombination by continuous HJ branch migration. Branch migration allows RuvC to scan DNA until it finds its consensus sequence, where it cleaves and resolves cruciform DNA. The polypeptide is Holliday junction branch migration complex subunit RuvB (Bacillus thuringiensis (strain Al Hakam)).